A 289-amino-acid chain; its full sequence is Rhodopsin (289 aa).

At 1 to 7 (YLVNPAA) the chain is on the extracellular side. Residues 8–32 (YAAPGAYMFLLILVGFPVNFLTLYV) traverse the membrane as a helical segment. Residues 33 to 44 (TLEHKKLRTPLN) are Cytoplasmic-facing. The helical transmembrane segment at 45 to 67 (YILLNLAVADLFMVLGGFTTTMY) threads the bilayer. The Extracellular segment spans residues 68–81 (TSMHGYFVLGRLGC). Cys-81 and Cys-158 are oxidised to a cystine. Residues 82–104 (NLEGFFATLGGEIALWSLVVLAI) traverse the membrane as a helical segment. The short motif at 105 to 107 (ERW) is the 'Ionic lock' involved in activated form stabilization element. At 105 to 123 (ERWIVVCKPISNFRFTEDH) the chain is on the cytoplasmic side. Residues 124-144 (AIMGLAFSWVMALTCAVPPLV) traverse the membrane as a helical segment. Residues 145–173 (GWSRYIPEGMQCSCGVDYYTRAEGFNNES) are Extracellular-facing. N-linked (GlcNAc...) asparagine glycosylation occurs at Asn-171. Residues 174–195 (FVIYMFIVHFLIPLSNNFFCYG) form a helical membrane-spanning segment. The Cytoplasmic segment spans residues 196–223 (RLLCAVKEAAAAQQESETTQRAEREVSR). The chain crosses the membrane as a helical span at residues 224–245 (MVVMMVVSFLMCWLPYASVAWY). The Extracellular segment spans residues 246–257 (IFCNQGSEFGPI). Residues 258 to 279 (FMTLPAFFAKSSAIYNPLIYIC) form a helical membrane-spanning segment. At Lys-267 the chain carries N6-(retinylidene)lysine. Residues 280 to 289 (MNKHVRHCMI) are Cytoplasmic-facing.

This sequence belongs to the G-protein coupled receptor 1 family. Opsin subfamily. In terms of processing, phosphorylated on some or all of the serine and threonine residues present in the C-terminal region. Contains one covalently linked retinal chromophore.

It localises to the membrane. Its subcellular location is the cell projection. The protein resides in the cilium. The protein localises to the photoreceptor outer segment. Functionally, photoreceptor required for image-forming vision at low light intensity. While most salt water fish species use retinal as chromophore, most freshwater fish use 3-dehydroretinal, or a mixture of retinal and 3-dehydroretinal. Light-induced isomerization of 11-cis to all-trans retinal triggers a conformational change that activates signaling via G-proteins. Subsequent receptor phosphorylation mediates displacement of the bound G-protein alpha subunit by arrestin and terminates signaling. The polypeptide is Rhodopsin (rho) (Cottocomephorus grewingkii (Baikal yellowfin)).